Consider the following 367-residue polypeptide: MKNEYLLLTPGPLSTSETVREAMLKDWCTWDDEYNKDIVEVIRTKLVKLATQQDGYTSVLMQGSGTASVEATIGSAIAKEGKLLVVDNGAYGARIAQIADYLNIPCHVVSPGETSQPHLNEVETALASDPAITHVAIVHCETTTGMLNPIEAFASVAKAHGKVVILDAMSSFGGIPIDIAELGIDFMISSANKCIQGVPGFGFVIAKQTELEKCQGQARSLSLDLYDQWHCMEVNHGKWRFTSPTHTVRAFYQALLELEQEGGIEARHNRYQTNQKTLVAGMRSLGFEPLLNDELHSPIITSFYSPTHSDYQFKAFYTRLKEQGFVIYPGKVSNADCFRIGNIGEVYPADIERLIGAIEKAMYWQVA.

Lys193 is subject to N6-(pyridoxal phosphate)lysine.

Belongs to the class-V pyridoxal-phosphate-dependent aminotransferase family. PhnW subfamily. As to quaternary structure, homodimer. Pyridoxal 5'-phosphate serves as cofactor.

The enzyme catalyses (2-aminoethyl)phosphonate + pyruvate = phosphonoacetaldehyde + L-alanine. In terms of biological role, involved in phosphonate degradation. The sequence is that of 2-aminoethylphosphonate--pyruvate transaminase from Vibrio vulnificus (strain CMCP6).